The following is a 194-amino-acid chain: Methylthioribulose-1-phosphate dehydratase (194 aa).

Positions 84 and 86 each coordinate Zn(2+).

This sequence belongs to the aldolase class II family. MtnB subfamily. The cofactor is Zn(2+).

The catalysed reaction is 5-(methylsulfanyl)-D-ribulose 1-phosphate = 5-methylsulfanyl-2,3-dioxopentyl phosphate + H2O. It participates in amino-acid biosynthesis; L-methionine biosynthesis via salvage pathway; L-methionine from S-methyl-5-thio-alpha-D-ribose 1-phosphate: step 2/6. Its function is as follows. Catalyzes the dehydration of methylthioribulose-1-phosphate (MTRu-1-P) into 2,3-diketo-5-methylthiopentyl-1-phosphate (DK-MTP-1-P). The chain is Methylthioribulose-1-phosphate dehydratase from Cronobacter sakazakii (Enterobacter sakazakii).